We begin with the raw amino-acid sequence, 310 residues long: Putative RING-H2 finger protein ATL53 (310 aa).

Residues Val-62–Val-82 traverse the membrane as a helical segment. The RING-type; atypical zinc finger occupies Cys-155–Arg-197.

The protein belongs to the RING-type zinc finger family. ATL subfamily.

Its subcellular location is the membrane. The enzyme catalyses S-ubiquitinyl-[E2 ubiquitin-conjugating enzyme]-L-cysteine + [acceptor protein]-L-lysine = [E2 ubiquitin-conjugating enzyme]-L-cysteine + N(6)-ubiquitinyl-[acceptor protein]-L-lysine.. It participates in protein modification; protein ubiquitination. The sequence is that of Putative RING-H2 finger protein ATL53 (ATL53) from Arabidopsis thaliana (Mouse-ear cress).